A 296-amino-acid polypeptide reads, in one-letter code: Formamidopyrimidine-DNA glycosylase (296 aa).

Pro-2 (schiff-base intermediate with DNA) is an active-site residue. Glu-3 (proton donor) is an active-site residue. Lys-61 functions as the Proton donor; for beta-elimination activity in the catalytic mechanism. DNA contacts are provided by His-104, Arg-123, and Lys-169. The segment at Asp-255 to Pro-289 adopts an FPG-type zinc-finger fold. Arg-279 functions as the Proton donor; for delta-elimination activity in the catalytic mechanism.

Belongs to the FPG family. As to quaternary structure, monomer. The cofactor is Zn(2+).

It carries out the reaction Hydrolysis of DNA containing ring-opened 7-methylguanine residues, releasing 2,6-diamino-4-hydroxy-5-(N-methyl)formamidopyrimidine.. It catalyses the reaction 2'-deoxyribonucleotide-(2'-deoxyribose 5'-phosphate)-2'-deoxyribonucleotide-DNA = a 3'-end 2'-deoxyribonucleotide-(2,3-dehydro-2,3-deoxyribose 5'-phosphate)-DNA + a 5'-end 5'-phospho-2'-deoxyribonucleoside-DNA + H(+). Its function is as follows. Involved in base excision repair of DNA damaged by oxidation or by mutagenic agents. Acts as a DNA glycosylase that recognizes and removes damaged bases. Has a preference for oxidized purines, such as 7,8-dihydro-8-oxoguanine (8-oxoG). Has AP (apurinic/apyrimidinic) lyase activity and introduces nicks in the DNA strand. Cleaves the DNA backbone by beta-delta elimination to generate a single-strand break at the site of the removed base with both 3'- and 5'-phosphates. The chain is Formamidopyrimidine-DNA glycosylase from Mycobacterium sp. (strain JLS).